The chain runs to 473 residues: Bifunctional protein HldE (473 aa).

The segment at 1–318 (MKLSMPRFDQ…RAVQREEGSE (318 aa)) is ribokinase. Residue 194–197 (NLGE) participates in ATP binding. The active site involves Asp-263. Residues 343-473 (FTNGCFDILH…TAIVEKIRKA (131 aa)) form a cytidylyltransferase region.

It in the N-terminal section; belongs to the carbohydrate kinase PfkB family. This sequence in the C-terminal section; belongs to the cytidylyltransferase family. In terms of assembly, homodimer.

It carries out the reaction D-glycero-beta-D-manno-heptose 7-phosphate + ATP = D-glycero-beta-D-manno-heptose 1,7-bisphosphate + ADP + H(+). The catalysed reaction is D-glycero-beta-D-manno-heptose 1-phosphate + ATP + H(+) = ADP-D-glycero-beta-D-manno-heptose + diphosphate. Its pathway is nucleotide-sugar biosynthesis; ADP-L-glycero-beta-D-manno-heptose biosynthesis; ADP-L-glycero-beta-D-manno-heptose from D-glycero-beta-D-manno-heptose 7-phosphate: step 1/4. The protein operates within nucleotide-sugar biosynthesis; ADP-L-glycero-beta-D-manno-heptose biosynthesis; ADP-L-glycero-beta-D-manno-heptose from D-glycero-beta-D-manno-heptose 7-phosphate: step 3/4. In terms of biological role, catalyzes the phosphorylation of D-glycero-D-manno-heptose 7-phosphate at the C-1 position to selectively form D-glycero-beta-D-manno-heptose-1,7-bisphosphate. Its function is as follows. Catalyzes the ADP transfer from ATP to D-glycero-beta-D-manno-heptose 1-phosphate, yielding ADP-D-glycero-beta-D-manno-heptose. In Stutzerimonas stutzeri (strain A1501) (Pseudomonas stutzeri), this protein is Bifunctional protein HldE.